Reading from the N-terminus, the 972-residue chain is mRNA transport regulator MTR10 (972 aa).

It localises to the nucleus. Involved in mRNA transport from nucleus to cytoplasm. This is mRNA transport regulator MTR10 (MTR10) from Saccharomyces cerevisiae (strain ATCC 204508 / S288c) (Baker's yeast).